A 72-amino-acid polypeptide reads, in one-letter code: Probable movement protein p8 (72 aa).

Positions 16–58 are disordered; that stretch reads GRARSVEGKKHNGSGLTGVKRHAVSETSQKSQQGTGNGTMTNI. The span at 40-58 shows a compositional bias: polar residues; sequence SETSQKSQQGTGNGTMTNI.

The protein belongs to the carmovirus/necrovirus/panicovirus movement protein p8 family.

Cell-to-cell movement. This is Probable movement protein p8 from Tobacco necrosis virus (strain A) (TNV-A).